The following is a 460-amino-acid chain: Xyloglucan 6-xylosyltransferase 1 (460 aa).

The Cytoplasmic portion of the chain corresponds to 1-20; that stretch reads MIEKCIGAHRFRRLQRFMRQ. Residues 21 to 40 traverse the membrane as a helical; Signal-anchor for type II membrane protein segment; sequence GKVTILCLVLTVIVLRGTIG. Topologically, residues 41-460 are lumenal; that stretch reads AGKFGTPEKD…KAAKLSTTTT (420 aa). UDP-alpha-D-xylose-binding positions include Gly-156 and 227 to 229; that span reads DSD. Mn(2+) is bound by residues Asp-227 and Asp-229. His-346 serves as a coordination point for substrate. Residues His-377, Gly-380, and Lys-382 each contribute to the UDP-alpha-D-xylose site. Residue His-377 coordinates Mn(2+). Residues Lys-382 and 389-390 contribute to the substrate site; that span reads DY. Residue Asn-431 is glycosylated (N-linked (GlcNAc...) asparagine).

It belongs to the glycosyltransferase 34 family. In terms of assembly, forms homodimer. Interacts with XXT2. Mn(2+) serves as cofactor.

It is found in the golgi apparatus membrane. The enzyme catalyses Transfers an alpha-D-xylosyl residue from UDP-D-xylose to a glucose residue in xyloglucan, forming an alpha-(1-&gt;6)-D-xylosyl-D-glucose linkage.. Its pathway is protein modification; protein glycosylation. Functionally, xylosyltransferase specific to UDP-D-xylose that accepts both cellopentaose and cellohexaose as substrates, with a better use of cellohexaose, to produce xyloglucan. Adds preferentially the first xylosyl residue to the fourth glucosyl residue from the reducing end of both acceptors. Transfer one xylose mainly to the second glucose residue from the non-reducing end. The acceptor should have a minimum of four glucose residues. This Arabidopsis thaliana (Mouse-ear cress) protein is Xyloglucan 6-xylosyltransferase 1.